The sequence spans 509 residues: Cytochrome P450 4A10 (509 aa).

The next 2 membrane-spanning stretches (helical) occupy residues 15-35 (LSGF…VKAV) and 121-141 (LLAP…WFQH). Glutamate 320 is a heme binding site. Serine 439 is modified (phosphoserine). Position 456 (cysteine 456) interacts with heme.

It belongs to the cytochrome P450 family. Requires heme as cofactor. As to expression, highly expressed in the kidneys of both genders.

The protein resides in the endoplasmic reticulum membrane. Its subcellular location is the microsome membrane. The catalysed reaction is an omega-methyl-long-chain fatty acid + reduced [NADPH--hemoprotein reductase] + O2 = an omega-hydroxy-long-chain fatty acid + oxidized [NADPH--hemoprotein reductase] + H2O + H(+). The enzyme catalyses dodecanoate + reduced [NADPH--hemoprotein reductase] + O2 = 12-hydroxydodecanoate + oxidized [NADPH--hemoprotein reductase] + H2O + H(+). It carries out the reaction dodecanoate + reduced [NADPH--hemoprotein reductase] + O2 = 11-hydroxydodecanoate + oxidized [NADPH--hemoprotein reductase] + H2O + H(+). It catalyses the reaction tetradecanoate + reduced [NADPH--hemoprotein reductase] + O2 = 14-hydroxytetradecanoate + oxidized [NADPH--hemoprotein reductase] + H2O + H(+). The catalysed reaction is hexadecanoate + reduced [NADPH--hemoprotein reductase] + O2 = 16-hydroxyhexadecanoate + oxidized [NADPH--hemoprotein reductase] + H2O + H(+). The enzyme catalyses (9Z)-octadecenoate + reduced [NADPH--hemoprotein reductase] + O2 = 18-hydroxy-(9Z)-octadecenoate + oxidized [NADPH--hemoprotein reductase] + H2O + H(+). It carries out the reaction (9Z,12Z)-octadecadienoate + reduced [NADPH--hemoprotein reductase] + O2 = 18-hydroxy-(9Z,12Z)-octadecadienoate + oxidized [NADPH--hemoprotein reductase] + H2O + H(+). It catalyses the reaction (9Z,12Z)-octadecadienoate + reduced [NADPH--hemoprotein reductase] + O2 = 17-hydroxy-(9Z,12Z)-octadecadienoate + oxidized [NADPH--hemoprotein reductase] + H2O + H(+). The catalysed reaction is (5Z,8Z,11Z,14Z)-eicosatetraenoate + reduced [NADPH--hemoprotein reductase] + O2 = 20-hydroxy-(5Z,8Z,11Z,14Z)-eicosatetraenoate + oxidized [NADPH--hemoprotein reductase] + H2O + H(+). The enzyme catalyses 8,9-epoxy-(5Z,11Z,14Z)-eicosatrienoate + reduced [NADPH--hemoprotein reductase] + O2 = 20-hydroxy-8,9-epoxy-(5Z,11Z,14Z)-eicosatrienoate + oxidized [NADPH--hemoprotein reductase] + H2O + H(+). Functionally, a cytochrome P450 monooxygenase involved in the metabolism of fatty acids. Catalyzes predominantly the oxidation of the terminal carbon (omega-oxidation) of long-chain fatty acids. Acts as a major omega-hydroxylase for dodecanoic (lauric) acid in liver. In kidney, may play an important role in omega-hydroxylation of (5Z,8Z,11Z,14Z)-eicosatetraenoic acid (arachidonate) to 20-hydroxyeicosatetraenoic acid (20-HETE), a signaling molecule acting both as vasoconstrictive and natriuretic with overall effect on arterial blood pressure. Also participates in the formation of anti-inflammatory hydroxyepoxyeicosatrienoic acids (HEETs) in kidney by converting 8,9-epoxyeicosatrienoic acid (EET) to 20,8,9-HEET, an activator of PPARA. Displays substantially lower fatty acid omega-1 hydroxylase activity. Mechanistically, uses molecular oxygen inserting one oxygen atom into a substrate, and reducing the second into a water molecule, with two electrons provided by NADPH via cytochrome P450 reductase (CPR; NADPH-ferrihemoprotein reductase). This is Cytochrome P450 4A10 from Mus musculus (Mouse).